Here is a 297-residue protein sequence, read N- to C-terminus: PIH1 domain-containing protein 1 (297 aa).

It belongs to the PIH1 family.

The protein localises to the nucleus. Functionally, involved in the assembly of C/D box small nucleolar ribonucleoprotein (snoRNP) particles. Recruits the SWI/SNF complex to the core promoter of rRNA genes and enhances pre-rRNA transcription. Mediates interaction of TELO2 with the R2TP complex which is necessary for the stability of MTOR and SMG1. Positively regulates the assembly and activity of the mTORC1 complex. This is PIH1 domain-containing protein 1 (pih1d1) from Xenopus laevis (African clawed frog).